The sequence spans 308 residues: Transaldolase (308 aa).

Catalysis depends on Lys125, which acts as the Schiff-base intermediate with substrate.

This sequence belongs to the transaldolase family. Type 1 subfamily. Homodimer.

It localises to the cytoplasm. It carries out the reaction D-sedoheptulose 7-phosphate + D-glyceraldehyde 3-phosphate = D-erythrose 4-phosphate + beta-D-fructose 6-phosphate. It participates in carbohydrate degradation; pentose phosphate pathway; D-glyceraldehyde 3-phosphate and beta-D-fructose 6-phosphate from D-ribose 5-phosphate and D-xylulose 5-phosphate (non-oxidative stage): step 2/3. Functionally, transaldolase is important for the balance of metabolites in the pentose-phosphate pathway. This Ectopseudomonas mendocina (strain ymp) (Pseudomonas mendocina) protein is Transaldolase.